The sequence spans 322 residues: Stage V sporulation protein K (322 aa).

99–106 (GNPGTGKT) provides a ligand contact to ATP.

This sequence belongs to the CbxX/CfxQ family.

The chain is Stage V sporulation protein K (spoVK) from Bacillus subtilis (strain 168).